Reading from the N-terminus, the 805-residue chain is Angiotensin-converting enzyme 2 (805 aa).

The signal sequence occupies residues 1-17 (MSSSSWLLLSLVAVTAA). Residues 18-740 (QSTIEEQAKT…LGPPNQPPVS (723 aa)) lie on the Extracellular side of the membrane. Positions 19–607 (STIEEQAKTF…QNKNSFVGWS (589 aa)) constitute a Peptidase M2 domain. Positions 30 to 41 (DKFNHEAEDLFY) are interaction with SARS-CoV spike glycoprotein. An N-linked (GlcNAc...) asparagine glycan is attached at N53. Residues 82–84 (MYP) are interaction with SARS-CoV spike glycoprotein. Residues N90 and N103 are each glycosylated (N-linked (GlcNAc...) asparagine). Residues C133 and C141 are joined by a disulfide bond. R169 serves as a coordination point for chloride. Residue R273 participates in substrate binding. An N-linked (GlcNAc...) asparagine glycan is attached at N322. An intrachain disulfide couples C344 to C361. 345–346 (HP) lines the substrate pocket. The interaction with SARS-CoV spike glycoprotein stretch occupies residues 353-357 (KGDFR). Zn(2+) is bound at residue H374. The Proton acceptor role is filled by E375. Residues H378 and E402 each contribute to the Zn(2+) site. A glycan (N-linked (GlcNAc...) asparagine) is linked at N432. Residues W477 and K481 each contribute to the chloride site. Catalysis depends on H505, which acts as the Proton donor. Residue Y515 participates in substrate binding. A disulfide bridge connects residues C530 and C542. N-linked (GlcNAc...) asparagine glycosylation occurs at N546. The Collectrin-like domain occupies 614–805 (ADQSIKVRIS…QNTDDVQTSF (192 aa)). The segment at 652–659 (RQYFLKVK) is essential for cleavage by ADAM17. Residue N690 is glycosylated (N-linked (GlcNAc...) asparagine). The essential for cleavage by TMPRSS11D and TMPRSS2 stretch occupies residues 697-716 (RTEVEKAIRMSRSRINDAFR). A helical transmembrane segment spans residues 741-761 (IWLIVFGVVMGVIVVGIVILI). Residues 762-805 (FTGIRDRKKKNKARSGENPYASIDISKGENNPGFQNTDDVQTSF) lie on the Cytoplasmic side of the membrane. The segment at 772 to 805 (NKARSGENPYASIDISKGENNPGFQNTDDVQTSF) is disordered. The LIR motif lies at 778-786 (ENPYASIDI). The residue at position 781 (Y781) is a Phosphotyrosine. An Endocytic sorting signal motif is present at residues 781–784 (YASI). The SH2-binding motif lies at 781–785 (YASID). A Phosphoserine modification is found at S783. Residue K788 forms a Glycyl lysine isopeptide (Lys-Gly) (interchain with G-Cter in ubiquitin) linkage. Polar residues predominate over residues 789–805 (GENNPGFQNTDDVQTSF). The PTB motif lies at 792–795 (NPGF). Residues 803–805 (TSF) carry the PDZ-binding motif.

Belongs to the peptidase M2 family. Homodimer. Interacts with the catalytically active form of TMPRSS2. Interacts with SLC6A19; this interaction is essential for expression and function of SLC6A19 in intestine. Interacts with ITGA5:ITGB1. Probably interacts (via endocytic sorting signal motif) with AP2M1; the interaction is inhibited by phosphorylation of Tyr-781. Interacts (via PDZ-binding motif) with NHERF1 (via PDZ domains); the interaction may enhance ACE2 membrane residence. In terms of assembly, (Microbial infection) Interacts with SARS coronavirus/SARS-CoV spike protein. As to quaternary structure, (Microbial infection) Interacts with SARS coronavirus-2/SARS-CoV-2 spike protein (via RBD domain). (Microbial infection) Interacts with human coronavirus NL63 spike protein. In terms of assembly, (Microbial infection) Interacts with human coronavirus NL63/HCoV-NL63 spike glycoprotein. As to quaternary structure, (Microbial infection) Interacts with SARS coronavirus-2/SARS-CoV-2 spike protein; the interaction is increased by AVP/Arg-vasopressin with which they may form a complex. It depends on Zn(2+) as a cofactor. The cofactor is chloride. N-glycosylation on Asn-90 may limit SARS infectivity. In terms of processing, proteolytic cleavage by ADAM17 generates a secreted form. Also cleaved by serine proteases: TMPRSS2, TMPRSS11D and HPN/TMPRSS1. Post-translationally, phosphorylated. Phosphorylation at Tyr-781 probably inhibits interaction with AP2M1 and enables interactions with proteins containing SH2 domains. Ubiquitinated. Ubiquitinated on Lys-788 via 'Lys-48'-linked ubiquitin. 'Lys-48'-linked deubiquitinated by USP50 on the Lys-788; leading to its stabilization. Expressed in endothelial cells from small and large arteries, and in arterial smooth muscle cells (at protein level). Expressed in enterocytes of the small intestine, Leydig cells and Sertoli cells (at protein level). Expressed in the renal proximal tubule and the small intestine (at protein level). Expressed in heart, kidney, testis, and gastrointestinal system (at protein level). In lung, expressed at low levels in some alveolar type 2 cells, the expression seems to be individual-specific (at protein level). Expressed in nasal epithelial cells (at protein level). Coexpressed with TMPRSS2 within some lung alveolar type 2 cells, ileal absorptive enterocytes, intestinal epithelial cells, cornea, gallbladder and nasal goblet secretory cells. Coexpressed with TMPRSS4 within mature enterocytes. In terms of tissue distribution, expressed in nasal and bronchial epithelial cells (at protein level).

The protein resides in the secreted. It is found in the cell membrane. Its subcellular location is the cytoplasm. It localises to the cell projection. The protein localises to the cilium. The protein resides in the apical cell membrane. It carries out the reaction angiotensin II + H2O = angiotensin-(1-7) + L-phenylalanine. The enzyme catalyses angiotensin I + H2O = angiotensin-(1-9) + L-leucine. It catalyses the reaction bradykinin(1-8) + H2O = bradykinin(1-7) + L-phenylalanine. The catalysed reaction is neurotensin + H2O = neurotensin-(1-12) + L-leucine. It carries out the reaction neurotensin-(1-8) + H2O = neurotensin-(1-7) + L-arginine. The enzyme catalyses kinetensin + H2O = kinetensin-(1-8) + L-leucine. It catalyses the reaction dynorphin A-(1-13) + H2O = dynorphin A-(1-12) + L-lysine. The catalysed reaction is apelin-13 + H2O = apelin-12 + L-phenylalanine. It carries out the reaction [Pyr1]apelin-13 + H2O = [Pyr1]apelin-12 + L-phenylalanine. The enzyme catalyses apelin-17 + H2O = apelin-16 + L-phenylalanine. It catalyses the reaction beta-casomorphin-7 + H2O = beta-casomorphin-6 + L-isoleucine. The catalysed reaction is neocasomorphin + H2O = neocasomorphin-(1-5) + L-isoleucine. Regulated by chloride and fluoride, but not bromide. Chloride increases angiotensin I and decreases angiotensin II cleavage. Inhibited by MLN-4760, cFP_Leu, and EDTA, but not by the ACE inhibitors lisinopril, captopril and enalaprilat. Highly potent and selective in vitro ACE2 inhibitors were identified. Its function is as follows. Essential counter-regulatory carboxypeptidase of the renin-angiotensin hormone system that is a critical regulator of blood volume, systemic vascular resistance, and thus cardiovascular homeostasis. Converts angiotensin I to angiotensin 1-9, a nine-amino acid peptide with anti-hypertrophic effects in cardiomyocytes, and angiotensin II to angiotensin 1-7, which then acts as a beneficial vasodilator and anti-proliferation agent, counterbalancing the actions of the vasoconstrictor angiotensin II. Also removes the C-terminal residue from three other vasoactive peptides, neurotensin, kinetensin, and des-Arg bradykinin, but is not active on bradykinin. Also cleaves other biological peptides, such as apelins (apelin-13, [Pyr1]apelin-13, apelin-17, apelin-36), casomorphins (beta-casomorphin-7, neocasomorphin) and dynorphin A with high efficiency. In addition, ACE2 C-terminus is homologous to collectrin and is responsible for the trafficking of the neutral amino acid transporter SL6A19 to the plasma membrane of gut epithelial cells via direct interaction, regulating its expression on the cell surface and its catalytic activity. (Microbial infection) Acts as a receptor for human coronaviruses SARS-CoV and SARS-CoV-2, as well as human coronavirus NL63/HCoV-NL63. Functionally, non-functional as a carboxypeptidase. In terms of biological role, (Microbial infection) Non-functional as a receptor for human coronavirus SARS-CoV-2. This chain is Angiotensin-converting enzyme 2, found in Homo sapiens (Human).